Here is a 141-residue protein sequence, read N- to C-terminus: Hemoglobin subunit alpha (141 aa).

In terms of domain architecture, Globin spans 1–141 (VLSPADKNNV…VSTVLTSKYR (141 aa)). Ser-3 carries the post-translational modification Phosphoserine. Lys-7 and Lys-11 each carry N6-succinyllysine. The residue at position 16 (Lys-16) is an N6-acetyllysine; alternate. The residue at position 16 (Lys-16) is an N6-succinyllysine; alternate. At Tyr-24 the chain carries Phosphotyrosine. Ser-35 is modified (phosphoserine). The residue at position 40 (Lys-40) is an N6-succinyllysine. Ser-49 is subject to Phosphoserine. His-58 provides a ligand contact to O2. A heme b-binding site is contributed by His-87. At Ser-102 the chain carries Phosphoserine. Phosphothreonine is present on Thr-108. 2 positions are modified to phosphoserine: Ser-124 and Ser-131. Phosphothreonine occurs at positions 134 and 137. Ser-138 carries the phosphoserine modification.

This sequence belongs to the globin family. Heterotetramer of two alpha chains and two beta chains. As to expression, red blood cells.

Functionally, involved in oxygen transport from the lung to the various peripheral tissues. Hemopressin acts as an antagonist peptide of the cannabinoid receptor CNR1. Hemopressin-binding efficiently blocks cannabinoid receptor CNR1 and subsequent signaling. The protein is Hemoglobin subunit alpha (HBA) of Urocitellus townsendii (Townsend's ground squirrel).